Reading from the N-terminus, the 198-residue chain is NAD(P)H-quinone oxidoreductase chain 6 (198 aa).

A run of 5 helical transmembrane segments spans residues 9–29 (YISF…VVLL), 32–52 (IVYS…IYIL), 61–81 (AQVL…IMLV), 100–120 (TALV…ITPW), and 145–165 (LLPF…AIIL).

Belongs to the complex I subunit 6 family.

The protein localises to the membrane. The enzyme catalyses a plastoquinone + NADH + (n+1) H(+)(in) = a plastoquinol + NAD(+) + n H(+)(out). The catalysed reaction is a plastoquinone + NADPH + (n+1) H(+)(in) = a plastoquinol + NADP(+) + n H(+)(out). Its function is as follows. NDH-1 shuttles electrons from NAD(P)H, via FMN and iron-sulfur (Fe-S) centers, to quinones in the respiratory chain. The immediate electron acceptor for the enzyme in this species is believed to be plastoquinone. Couples the redox reaction to proton translocation (for every two electrons transferred, four hydrogen ions are translocated across the cytoplasmic membrane), and thus conserves the redox energy in a proton gradient. The protein is NAD(P)H-quinone oxidoreductase chain 6 (ndhG) of Synechocystis sp. (strain ATCC 27184 / PCC 6803 / Kazusa).